We begin with the raw amino-acid sequence, 282 residues long: 4-diphosphocytidyl-2-C-methyl-D-erythritol kinase (282 aa).

The active site involves K9. 98-108 provides a ligand contact to ATP; that stretch reads PMGGGLGGGSS. Residue D140 is part of the active site.

This sequence belongs to the GHMP kinase family. IspE subfamily. As to quaternary structure, homodimer.

It carries out the reaction 4-CDP-2-C-methyl-D-erythritol + ATP = 4-CDP-2-C-methyl-D-erythritol 2-phosphate + ADP + H(+). The protein operates within isoprenoid biosynthesis; isopentenyl diphosphate biosynthesis via DXP pathway; isopentenyl diphosphate from 1-deoxy-D-xylulose 5-phosphate: step 3/6. Catalyzes the phosphorylation of the position 2 hydroxy group of 4-diphosphocytidyl-2C-methyl-D-erythritol. The protein is 4-diphosphocytidyl-2-C-methyl-D-erythritol kinase of Salmonella paratyphi B (strain ATCC BAA-1250 / SPB7).